The sequence spans 102 residues: N(4)-acetylcytidine amidohydrolase (102 aa).

Residues 6–92 (TFFGRFEADI…VIKAIYPGLD (87 aa)) enclose the ASCH domain. Residue Lys20 is the Proton acceptor of the active site. Residue Thr23 is the Nucleophile of the active site. Glu73 acts as the Proton donor in catalysis.

Belongs to the N(4)-acetylcytidine amidohydrolase family.

It carries out the reaction N(4)-acetylcytidine + H2O = cytidine + acetate + H(+). The enzyme catalyses N(4)-acetyl-2'-deoxycytidine + H2O = 2'-deoxycytidine + acetate + H(+). It catalyses the reaction N(4)-acetylcytosine + H2O = cytosine + acetate + H(+). Its function is as follows. Catalyzes the hydrolysis of N(4)-acetylcytidine (ac4C). This chain is N(4)-acetylcytidine amidohydrolase, found in Yersinia pseudotuberculosis serotype O:1b (strain IP 31758).